The primary structure comprises 254 residues: Imidazole glycerol phosphate synthase subunit HisF (254 aa).

Residues aspartate 12 and aspartate 131 contribute to the active site.

It belongs to the HisA/HisF family. As to quaternary structure, heterodimer of HisH and HisF.

Its subcellular location is the cytoplasm. It catalyses the reaction 5-[(5-phospho-1-deoxy-D-ribulos-1-ylimino)methylamino]-1-(5-phospho-beta-D-ribosyl)imidazole-4-carboxamide + L-glutamine = D-erythro-1-(imidazol-4-yl)glycerol 3-phosphate + 5-amino-1-(5-phospho-beta-D-ribosyl)imidazole-4-carboxamide + L-glutamate + H(+). Its pathway is amino-acid biosynthesis; L-histidine biosynthesis; L-histidine from 5-phospho-alpha-D-ribose 1-diphosphate: step 5/9. IGPS catalyzes the conversion of PRFAR and glutamine to IGP, AICAR and glutamate. The HisF subunit catalyzes the cyclization activity that produces IGP and AICAR from PRFAR using the ammonia provided by the HisH subunit. This chain is Imidazole glycerol phosphate synthase subunit HisF, found in Corynebacterium aurimucosum (strain ATCC 700975 / DSM 44827 / CIP 107346 / CN-1) (Corynebacterium nigricans).